A 123-amino-acid polypeptide reads, in one-letter code: Ribosome-binding factor A (123 aa).

It belongs to the RbfA family. In terms of assembly, monomer. Binds 30S ribosomal subunits, but not 50S ribosomal subunits or 70S ribosomes.

Its subcellular location is the cytoplasm. In terms of biological role, one of several proteins that assist in the late maturation steps of the functional core of the 30S ribosomal subunit. Associates with free 30S ribosomal subunits (but not with 30S subunits that are part of 70S ribosomes or polysomes). Required for efficient processing of 16S rRNA. May interact with the 5'-terminal helix region of 16S rRNA. The sequence is that of Ribosome-binding factor A from Trichlorobacter lovleyi (strain ATCC BAA-1151 / DSM 17278 / SZ) (Geobacter lovleyi).